Here is a 555-residue protein sequence, read N- to C-terminus: Inorganic phosphate transporter 1-11 (555 aa).

At 1 to 28 (MADADGGSNLAVLDALDSARTQMYHMKA) the chain is on the cytoplasmic side. Residues 29-49 (IVIAGMGFFTDAYDLFCISTV) traverse the membrane as a helical segment. Residues 50-77 (SKLLGRLYYQPDGSTDSKPGALSKTANN) lie on the Extracellular side of the membrane. Residues 78 to 98 (MVIGVALVGTLMGQLVFGYFG) form a helical membrane-spanning segment. The Cytoplasmic portion of the chain corresponds to 99–105 (DKLGRKR). A helical membrane pass occupies residues 106–126 (VYGVTLILMAACAIGSGLSFG). Residues 127–130 (SSRK) are Extracellular-facing. Residues 131–151 (AVIGTLCFFRFWLGFGIGGDY) traverse the membrane as a helical segment. Topologically, residues 152–167 (PLSATIMSEYSNKKTR) are cytoplasmic. The helical transmembrane segment at 168-188 (GAFIAAVFAMQGVGIIFAGLV) threads the bilayer. Topologically, residues 189–216 (SMIVSSIFLTYNKAPSYKGNHDLSRQMP) are extracellular. A helical membrane pass occupies residues 217-237 (AADYVWRIVLMIGAFPALATF). At 238–298 (YWRMKMPETA…PLLSMEFARR (61 aa)) the chain is on the cytoplasmic side. The chain crosses the membrane as a helical span at residues 299 to 319 (HGLHLIGTTTTWFLLDIAFYS). Residues 320 to 351 (QNLTQKDIFPAMGLISGAAEVNALTEMFQISK) are Extracellular-facing. Residues 352-372 (ASFLVALLGTFPGYWVTVALI) traverse the membrane as a helical segment. Over 373–377 (DKMGR) the chain is Cytoplasmic. The helical transmembrane segment at 378–398 (YMIQLIGFFMMSMFMLAMGIL) threads the bilayer. At 399-408 (YDYLKTHHFL) the chain is on the extracellular side. The chain crosses the membrane as a helical span at residues 409-436 (FGLLYALTFFFANFGPNSTTFVLPAELF). The Cytoplasmic portion of the chain corresponds to 437–442 (PTRVRS). A helical transmembrane segment spans residues 443-463 (TCHAISAAAGKAGAIVAAFGI). Over 464-477 (QKLTYNSQVKSIKK) the chain is Extracellular. Residues 478–498 (ALIILSITNMLGFFFTFLVPE) traverse the membrane as a helical segment. Residues 499 to 555 (TMGRSLEEISGEDGNTGAGGGGAPAAANAGVGVSASDVSRDEKFPASSTEWQTSMHA) are Cytoplasmic-facing. The segment at 506–555 (EISGEDGNTGAGGGGAPAAANAGVGVSASDVSRDEKFPASSTEWQTSMHA) is disordered. Over residues 512 to 521 (GNTGAGGGGA) the composition is skewed to gly residues. The segment covering 522-535 (PAAANAGVGVSASD) has biased composition (low complexity). The segment covering 544 to 555 (ASSTEWQTSMHA) has biased composition (polar residues).

Belongs to the major facilitator superfamily. Phosphate:H(+) symporter (TC 2.A.1.9) family.

Its subcellular location is the membrane. In terms of biological role, symbiosis-specific regulated inorganic phosphate (Pi) transporter. Probably involved in symbiosis-mediated Pi uptake in roots colonized by myccorhizal fungi. This Oryza sativa subsp. japonica (Rice) protein is Inorganic phosphate transporter 1-11 (PHT1-11).